A 331-amino-acid chain; its full sequence is Protoheme IX farnesyltransferase (331 aa).

8 consecutive transmembrane segments (helical) span residues 63 to 83 (LACT…LNCL), 109 to 129 (SVFI…VSGV), 132 to 152 (LAAG…TAFL), 160 to 180 (IVFG…AAAG), 188 to 208 (WLFS…AILL), 215 to 235 (VGIP…AISV), 241 to 261 (VFLS…YGIL), and 294 to 314 (ILYM…VSIV).

The protein belongs to the UbiA prenyltransferase family. Protoheme IX farnesyltransferase subfamily.

The protein resides in the cell inner membrane. The enzyme catalyses heme b + (2E,6E)-farnesyl diphosphate + H2O = Fe(II)-heme o + diphosphate. It participates in porphyrin-containing compound metabolism; heme O biosynthesis; heme O from protoheme: step 1/1. Its function is as follows. Converts heme B (protoheme IX) to heme O by substitution of the vinyl group on carbon 2 of heme B porphyrin ring with a hydroxyethyl farnesyl side group. The protein is Protoheme IX farnesyltransferase of Prochlorococcus marinus (strain NATL1A).